The sequence spans 213 residues: ATP-dependent dethiobiotin synthetase BioD (213 aa).

Residue 12 to 17 (EVGKTY) participates in ATP binding. Thr16 is a binding site for Mg(2+). Lys37 is a catalytic residue. ATP-binding positions include Asp46, 107–110 (EGVG), and 167–168 (NN). Residues Asp46 and Glu107 each coordinate Mg(2+).

Belongs to the dethiobiotin synthetase family. As to quaternary structure, homodimer. Requires Mg(2+) as cofactor.

The protein resides in the cytoplasm. The catalysed reaction is (7R,8S)-7,8-diammoniononanoate + CO2 + ATP = (4R,5S)-dethiobiotin + ADP + phosphate + 3 H(+). It functions in the pathway cofactor biosynthesis; biotin biosynthesis; biotin from 7,8-diaminononanoate: step 1/2. Functionally, catalyzes a mechanistically unusual reaction, the ATP-dependent insertion of CO2 between the N7 and N8 nitrogen atoms of 7,8-diaminopelargonic acid (DAPA, also called 7,8-diammoniononanoate) to form a ureido ring. The sequence is that of ATP-dependent dethiobiotin synthetase BioD from Akkermansia muciniphila (strain ATCC BAA-835 / DSM 22959 / JCM 33894 / BCRC 81048 / CCUG 64013 / CIP 107961 / Muc).